The following is a 347-amino-acid chain: 5-deoxyribose 1-phosphate isomerase (347 aa).

Residues 48–50, Arg91, and Gln198 each bind substrate; that span reads RGA. Catalysis depends on Asp239, which acts as the Proton donor. 249 to 250 provides a ligand contact to substrate; sequence NK.

This sequence belongs to the EIF-2B alpha/beta/delta subunits family. DrdI subfamily.

The enzyme catalyses 5-deoxy-alpha-D-ribose 1-phosphate = 5-deoxy-D-ribulose 1-phosphate. It participates in carbohydrate degradation. Its function is as follows. Catalyzes the isomerization of 5-deoxy-alpha-D-ribose 1-phosphate to 5-deoxy-D-ribulose 1-phosphate, as part of a 5-deoxyribose salvage pathway that recycles this toxic radical SAM enzyme by-product to mainstream metabolites. This Bacillus thuringiensis subsp. konkukian (strain 97-27) protein is 5-deoxyribose 1-phosphate isomerase.